Here is a 332-residue protein sequence, read N- to C-terminus: Ribosomal RNA small subunit methyltransferase H (332 aa).

S-adenosyl-L-methionine contacts are provided by residues 34 to 36 (GGH), Asp-59, Phe-86, Asp-112, and Gln-119.

The protein belongs to the methyltransferase superfamily. RsmH family.

The protein resides in the cytoplasm. It catalyses the reaction cytidine(1402) in 16S rRNA + S-adenosyl-L-methionine = N(4)-methylcytidine(1402) in 16S rRNA + S-adenosyl-L-homocysteine + H(+). Specifically methylates the N4 position of cytidine in position 1402 (C1402) of 16S rRNA. The protein is Ribosomal RNA small subunit methyltransferase H of Chlorobium phaeobacteroides (strain BS1).